The following is a 123-amino-acid chain: SGSCEVKTCWWAQPDFRAIGDYLKDKYDSASEMVVEKHRESRGWVETLRAKYALFKPPTERDLVYYENSPNFCEPNPETGLFGTRDRTCNVTSHGIDGCDLLCCGRGHNTRTEKRKEKCHCIF.

S1 carries the O-palmitoleoyl serine; by PORCN lipid modification. A disulfide bridge links C89 with C104. N90 carries N-linked (GlcNAc...) asparagine glycosylation.

It belongs to the Wnt family. Post-translationally, palmitoleoylation is required for efficient binding to frizzled receptors. Depalmitoleoylation leads to Wnt signaling pathway inhibition.

Its subcellular location is the secreted. The protein localises to the extracellular space. It localises to the extracellular matrix. Functionally, ligand for members of the frizzled family of seven transmembrane receptors. Probable developmental protein. May be a signaling molecule which affects the development of discrete regions of tissues. Is likely to signal over only few cell diameters. The chain is Protein Wnt-3b (WNT3B) from Meleagris gallopavo (Wild turkey).